We begin with the raw amino-acid sequence, 150 residues long: Myeloid-derived growth factor homolog (150 aa).

The signal sequence occupies residues 1–22; it reads MTFLKYLLILCTIFLMVTNSLS.

The protein belongs to the MYDGF family.

The protein resides in the secreted. The polypeptide is Myeloid-derived growth factor homolog (Dictyostelium discoideum (Social amoeba)).